The primary structure comprises 184 residues: TRAF-interacting protein with FHA domain-containing protein A (184 aa).

T9 carries the post-translational modification Phosphothreonine; by ALPK1. The 57-residue stretch at 47 to 103 folds into the FHA domain; it reads VKFGRNSNICHYTFQDKQVSRVQFSLQLFKKFNSSVLSFEIKNMSKKTNLIVDSREL. Residues 165–184 form a disordered region; sequence TYSLCSSQSSSPTEMDENES. The segment covering 167–177 has biased composition (polar residues); the sequence is SLCSSQSSSPT.

The protein belongs to the TIFA family. As to quaternary structure, homooligomer; homooligomerizes following phosphorylation at Thr-9. Interacts with IRAK1, TRAF2 and TRAF6. Interacts with TIFAB; binding to TIFAB inhibits TRAF6 activation, possibly by inducing a conformational change in TIFA. Interacts with ZCCHC11; binding to ZCCHC11 suppresses the TRAF6-dependent activation of NF-kappa-B. Phosphorylated at Thr-9 following detection of ADP-D-glycero-beta-D-manno-heptose (ADP-Heptose) by ALPK1. Phosphorylation at Thr-9 by ALPK1 leads to the formation of an intermolecular binding between the FHA domain and phosphorylated Thr-9, promoting TIFA oligomerization and TIFA-mediated NF-kappa-B activation.

It is found in the cytoplasm. Functionally, adapter molecule that plays a key role in the activation of pro-inflammatory NF-kappa-B signaling following detection of bacterial pathogen-associated molecular pattern metabolites (PAMPs). Promotes activation of an innate immune response by inducing the oligomerization and polyubiquitination of TRAF6, which leads to the activation of TAK1 and IKK through a proteasome-independent mechanism. TIFA-dependent innate immune response is triggered by ADP-D-glycero-beta-D-manno-heptose (ADP-Heptose), a potent PAMP present in all Gram-negative and some Gram-positive bacteria: ADP-Heptose is recognized by ALPK1, which phosphorylates TIFA at Thr-9, leading to TIFA homooligomerization and subsequent activation of pro-inflammatory NF-kappa-B signaling. This is TRAF-interacting protein with FHA domain-containing protein A from Homo sapiens (Human).